A 202-amino-acid polypeptide reads, in one-letter code: NADH-quinone oxidoreductase subunit B (202 aa).

[4Fe-4S] cluster-binding residues include Cys81, Cys82, Cys146, and Cys176.

It belongs to the complex I 20 kDa subunit family. In terms of assembly, NDH-1 is composed of 14 different subunits. Subunits NuoB, C, D, E, F, and G constitute the peripheral sector of the complex. It depends on [4Fe-4S] cluster as a cofactor.

It is found in the cell inner membrane. The catalysed reaction is a quinone + NADH + 5 H(+)(in) = a quinol + NAD(+) + 4 H(+)(out). Functionally, NDH-1 shuttles electrons from NADH, via FMN and iron-sulfur (Fe-S) centers, to quinones in the respiratory chain. The immediate electron acceptor for the enzyme in this species is believed to be ubiquinone. Couples the redox reaction to proton translocation (for every two electrons transferred, four hydrogen ions are translocated across the cytoplasmic membrane), and thus conserves the redox energy in a proton gradient. The sequence is that of NADH-quinone oxidoreductase subunit B from Bradyrhizobium diazoefficiens (strain JCM 10833 / BCRC 13528 / IAM 13628 / NBRC 14792 / USDA 110).